The sequence spans 258 residues: MGVEKIKAAFENGKKAFIPYVMGGDGGLEKLKERIRFLDEAGASIVEIGIPFSDPVADGPTIQRAGKRALDSGVTLKGIFQALAEVRKEVQMPFVLMTYLNPVLAFGKERFIENCIEAGVDGIIVPDLPYEEQNIIAPLLREVNIALIPLVTVTSPIERIEKITSESEGFVYAVTVAGVTGVRQNFKEEIHSYLEKVKSHVNLPVVAGFGISTKEHVEEMVTICDGVVVGSKVIELLENEKREEICELIYATKQKEEA.

Catalysis depends on proton acceptor residues E47 and D58.

This sequence belongs to the TrpA family. Tetramer of two alpha and two beta chains.

The enzyme catalyses (1S,2R)-1-C-(indol-3-yl)glycerol 3-phosphate + L-serine = D-glyceraldehyde 3-phosphate + L-tryptophan + H2O. It functions in the pathway amino-acid biosynthesis; L-tryptophan biosynthesis; L-tryptophan from chorismate: step 5/5. In terms of biological role, the alpha subunit is responsible for the aldol cleavage of indoleglycerol phosphate to indole and glyceraldehyde 3-phosphate. This Bacillus cereus (strain ATCC 14579 / DSM 31 / CCUG 7414 / JCM 2152 / NBRC 15305 / NCIMB 9373 / NCTC 2599 / NRRL B-3711) protein is Tryptophan synthase alpha chain.